The primary structure comprises 108 residues: MVATGLFVGLNKGHVVTKREQPPRPNNRKGKTSKRTIFIRNLIKEVAGQAPYEKRITELLKVGKDKRALKVAKRKLGTHKRAKRKREEMSSVLRKMRSGGAGASEKKK.

Disordered stretches follow at residues 13–34 (GHVV…KTSK) and 75–108 (KLGT…EKKK). Residues 75-84 (KLGTHKRAKR) show a composition bias toward basic residues.

The protein belongs to the eukaryotic ribosomal protein eL36 family.

The chain is Large ribosomal subunit protein eL36x (RPL36C) from Arabidopsis thaliana (Mouse-ear cress).